The chain runs to 635 residues: DNA mismatch repair protein MutL (635 aa).

A disordered region spans residues 352 to 380 (KAALQRGWVPPGAGRPGEGGGRAAPPPWR).

The protein belongs to the DNA mismatch repair MutL/HexB family.

Functionally, this protein is involved in the repair of mismatches in DNA. It is required for dam-dependent methyl-directed DNA mismatch repair. May act as a 'molecular matchmaker', a protein that promotes the formation of a stable complex between two or more DNA-binding proteins in an ATP-dependent manner without itself being part of a final effector complex. The polypeptide is DNA mismatch repair protein MutL (Symbiobacterium thermophilum (strain DSM 24528 / JCM 14929 / IAM 14863 / T)).